We begin with the raw amino-acid sequence, 270 residues long: Phosphonoacetaldehyde hydrolase (270 aa).

The active-site Nucleophile is D11. The Mg(2+) site is built by D11 and A13. K53 (schiff-base intermediate with substrate) is an active-site residue. Residue D187 participates in Mg(2+) binding.

Belongs to the HAD-like hydrolase superfamily. PhnX family. Homodimer. Requires Mg(2+) as cofactor.

The enzyme catalyses phosphonoacetaldehyde + H2O = acetaldehyde + phosphate + H(+). Functionally, involved in phosphonate degradation. The protein is Phosphonoacetaldehyde hydrolase of Salmonella enteritidis PT4 (strain P125109).